A 337-amino-acid polypeptide reads, in one-letter code: 2-oxoglutarate-dependent dioxygenase frbA (337 aa).

Residues 175–290 enclose the Fe2OG dioxygenase domain; it reads CSAELRLNHY…RHSLAYFGKP (116 aa). Positions 202, 204, and 262 each coordinate Fe cation. R281 provides a ligand contact to 2-oxoglutarate.

It belongs to the iron/ascorbate-dependent oxidoreductase family. It depends on Fe(2+) as a cofactor.

The protein operates within antifungal biosynthesis. Functionally, 2-oxoglutarate-dependent dioxygenase; part of the gene cluster that mediates the biosynthesis of the antifungal antibiotic FR901469, an inhibitor of beta-1,3-glucansynthase, exerting antifungal activity against the pathogenes Candida albicans and Aspergillus fumigatus. FR901469 is a cyclic depsipeptide containing 12 amino acid residues and a fatty acid chain. The NRPS frbI contains 12 modules responsible for the formation of the depsipeptide backbone which is denoted as Acyl-Thr-Ala-Tyr-Val-4OHPro-Thr-Thr-3OHPro-threo3OHGln-Gly-Thr-Orn-OH (C71H116N14O23). The PKS frbB is probably involved in the production of the hydrocarbon chain, and the acyl-CoA ligase frbC might be involved in the transport of the chain to the peptide ptoduct of frbI. Because FR901469 contains 3 hydroxylated amino acid residues, the 3 oxygenases frbA, frbH, and frbJ might be participating in amino acid hydroxylation. As no thioesterase domains were detected in frbI or frbB, the thioesterases frbD and frbE may instead release and cyclize the products of the NRPS and PKS, respectively. The polypeptide is 2-oxoglutarate-dependent dioxygenase frbA (Dothideomycetidae sp. (strain 11243) (Fungal sp. (strain No.11243))).